A 244-amino-acid polypeptide reads, in one-letter code: Acetoacetate decarboxylase (244 aa).

Lysine 115 serves as the catalytic Schiff-base intermediate with acetoacetate.

Belongs to the ADC family.

The enzyme catalyses acetoacetate + H(+) = acetone + CO2. In terms of biological role, catalyzes the conversion of acetoacetate to acetone and carbon dioxide. The chain is Acetoacetate decarboxylase from Streptomyces nogalater.